Reading from the N-terminus, the 430-residue chain is sn-glycerol-3-phosphate-binding periplasmic protein UgpB (430 aa).

An N-terminal signal peptide occupies residues 1 to 20 (MRLISISTTIAFGFAFQAQA). Residues Y62, D86, S141, S268, G302, Y341, and R392 each contribute to the sn-glycerol 3-phosphate site.

This sequence belongs to the bacterial solute-binding protein 1 family. The complex is composed of two ATP-binding proteins (UgpC), two transmembrane proteins (UgpA and UgpE) and a solute-binding protein (UgpB).

The protein resides in the periplasm. In terms of biological role, part of the ABC transporter complex UgpBAEC involved in sn-glycerol-3-phosphate (G3P) import. Binds G3P. The polypeptide is sn-glycerol-3-phosphate-binding periplasmic protein UgpB (ugpB) (Rhizobium meliloti (strain 1021) (Ensifer meliloti)).